Here is a 65-residue protein sequence, read N- to C-terminus: Large ribosomal subunit protein bL33c (65 aa).

This sequence belongs to the bacterial ribosomal protein bL33 family.

It localises to the plastid. The protein resides in the chloroplast. In Zygnema circumcarinatum (Green alga), this protein is Large ribosomal subunit protein bL33c.